The following is a 54-amino-acid chain: uncharacterized protein (54 aa).

Residues 1–28 (MDRKKDEIQRKYREQMREKKEREKEDGS) show a composition bias toward basic and acidic residues. Residues 1–29 (MDRKKDEIQRKYREQMREKKEREKEDGSS) are disordered. Residues 31-51 (TFEIVVVLAIIILMFFFNSVF) form a helical membrane-spanning segment.

It localises to the cell membrane. This is an uncharacterized protein from Bacillus subtilis (strain 168).